The primary structure comprises 416 residues: Peroxisomal isocitrate dehydrogenase [NADP] (416 aa).

Residues 77-79 (TIT) and arginine 84 contribute to the NADP(+) site. Substrate is bound at residue threonine 79. Residues 96-102 (SPNGTIR), arginine 111, and arginine 134 each bind substrate. Aspartate 253 is a Mn(2+) binding site. Lysine 261 contributes to the NADP(+) binding site. Aspartate 276 is a binding site for Mn(2+). Residues 311–316 (GTVTRH) and asparagine 329 contribute to the NADP(+) site. Positions 414–416 (SRL) match the Peroxisomal targeting signal motif.

Belongs to the isocitrate and isopropylmalate dehydrogenases family. Mg(2+) is required as a cofactor. The cofactor is Mn(2+).

Its subcellular location is the peroxisome. It carries out the reaction D-threo-isocitrate + NADP(+) = 2-oxoglutarate + CO2 + NADPH. In terms of biological role, may be involved in response to oxidative stresses. The protein is Peroxisomal isocitrate dehydrogenase [NADP] (ICDH) of Arabidopsis thaliana (Mouse-ear cress).